We begin with the raw amino-acid sequence, 912 residues long: Microtubule-associated protein 10 (912 aa).

Disordered regions lie at residues 31–50 (VAEEEQKEEGEGASPPRPSR), 209–239 (KSVEVSPQTWQENQQLQQPDSEPSPGDADKP), 254–296 (GRAF…QEGT), 335–366 (ASEEWDDGTFLKENVNPPTHTNPPEHTNSATG), 443–469 (SPESSVKSTCKSESKKDKLSVGENEKS), and 730–859 (RACD…VSSY). Polar residues predominate over residues 211-229 (VEVSPQTWQENQQLQQPDS). Residues 254-263 (GRAFHSKADS) show a composition bias toward basic and acidic residues. Over residues 266 to 295 (TDSMENGKTNSDMCSKGSSERSVSPPNQEG) the composition is skewed to polar residues. The segment covering 347-362 (ENVNPPTHTNPPEHTN) has biased composition (low complexity). Basic and acidic residues predominate over residues 452-468 (CKSESKKDKLSVGENEK). Polar residues predominate over residues 735–768 (SPGTENPKNSQHTSTSSETRLSIRKNSSAKSSIL). Residues 796-807 (EASSSDFSSSQW) show a composition bias toward low complexity. Residues 841–859 (GCKSSEKSQSPRTSQVSSY) are compositionally biased toward polar residues.

Interacts (via middle region) with microtubules.

Its subcellular location is the cytoplasm. It localises to the cytoskeleton. It is found in the spindle pole. The protein resides in the microtubule organizing center. The protein localises to the centrosome. Its subcellular location is the midbody. Its function is as follows. Microtubule-associated protein (MAP) that plays a role in the regulation of cell division; promotes microtubule stability and participates in the organization of the spindle midzone and normal progress of cytokinesis. The sequence is that of Microtubule-associated protein 10 (MAP10) from Bos taurus (Bovine).